The primary structure comprises 359 residues: Lactosylceramide 4-alpha-galactosyltransferase (359 aa).

Topologically, residues 1 to 30 (MGISCSHLEETMSKPPDCLLRMLRGTPRQR) are cytoplasmic. Residues 31–51 (VFTFFIISFKFMFLISILIYW) form a helical; Signal-anchor for type II membrane protein membrane-spanning segment. Residues 52–359 (HTVGAPKDQR…TTHRAMKMYL (308 aa)) are Lumenal-facing. The DXD motif motif lies at 198-200 (DTD). 2 N-linked (GlcNAc...) asparagine glycosylation sites follow: asparagine 209 and asparagine 315.

The protein belongs to the glycosyltransferase 32 family.

The protein localises to the golgi apparatus membrane. The catalysed reaction is a beta-D-Gal-(1-&gt;4)-beta-D-Glc-(1&lt;-&gt;1)-Cer(d18:1(4E)) + UDP-alpha-D-galactose = a globoside Gb3Cer (d18:1(4E)) + UDP + H(+). It carries out the reaction a beta-D-Gal-(1&lt;-&gt;1')-ceramide + UDP-alpha-D-galactose = alpha-D-Gal-(1-&gt;4)-beta-D-Gal-(1&lt;-&gt;1')-Cer + UDP + H(+). The protein operates within glycolipid biosynthesis. Its function is as follows. Catalyzes the transfer of galactose from UDP-alpha-D-galactose to lactosylceramide/beta-D-galactosyl-(1-&gt;4)-beta-D-glucosyl-(1&lt;-&gt;1)-ceramide(d18:1(4E)) to produce globotriaosylceramide/globoside Gb3Cer (d18:1(4E)). Also able to transfer galactose to galactosylceramide/beta-D-Gal-(1&lt;-&gt;1')-Cer. Globoside Gb3Cer is a glycosphingolipid of the globo serie, one of the major types of neutral root structures of glycosphingolipids, that constitute a significant portion of mammalian cell membranes. The chain is Lactosylceramide 4-alpha-galactosyltransferase from Mus musculus (Mouse).